The primary structure comprises 337 residues: Glyceraldehyde-3-phosphate dehydrogenase 1 (337 aa).

Residues 11-12 (RI), aspartate 33, and arginine 78 contribute to the NAD(+) site. Residues 149–151 (SCT), threonine 180, 209–210 (TG), and arginine 232 each bind D-glyceraldehyde 3-phosphate. Cysteine 150 serves as the catalytic Nucleophile. Residue asparagine 318 coordinates NAD(+).

The protein belongs to the glyceraldehyde-3-phosphate dehydrogenase family. Homotetramer.

The protein localises to the cytoplasm. It carries out the reaction D-glyceraldehyde 3-phosphate + phosphate + NAD(+) = (2R)-3-phospho-glyceroyl phosphate + NADH + H(+). It participates in carbohydrate degradation; glycolysis; pyruvate from D-glyceraldehyde 3-phosphate: step 1/5. The polypeptide is Glyceraldehyde-3-phosphate dehydrogenase 1 (gpd1) (Agaricus bisporus (White button mushroom)).